We begin with the raw amino-acid sequence, 103 residues long: Pilin (103 aa).

The first 30 residues, 1 to 30, serve as a signal peptide directing secretion; that stretch reads MYRFACRTLMLAACILATGVAGLGVGAQSA. Residues 61–76 are compositionally biased toward basic and acidic residues; it reads HDDFHRDSDGPDHSRD. A disordered region spans residues 61–103; the sequence is HDDFHRDSDGPDHSRDYPGPILEGPVLDDPGAAPPPPAAGGGA. The span at 92-103 shows a compositional bias: pro residues; the sequence is AAPPPPAAGGGA.

Belongs to the mycobacterial pilin family. Forms a homomer composed of subunits assembled in a large structure.

The protein resides in the fimbrium. Its function is as follows. Structural subunit of pili, which are thin, flexible, coiled-coil, aggregative fibers. Mediates adhesion to the extracellular matrix, an event that would facilitate direct interaction with the host epithelium during infection in the lung or other tissues. This Mycobacterium bovis (strain ATCC BAA-935 / AF2122/97) protein is Pilin (mtp).